Here is a 202-residue protein sequence, read N- to C-terminus: Nucleoside triphosphate pyrophosphatase (202 aa).

The Proton acceptor role is filled by D79.

The protein belongs to the Maf family. A divalent metal cation serves as cofactor.

It is found in the cytoplasm. It carries out the reaction a ribonucleoside 5'-triphosphate + H2O = a ribonucleoside 5'-phosphate + diphosphate + H(+). The enzyme catalyses a 2'-deoxyribonucleoside 5'-triphosphate + H2O = a 2'-deoxyribonucleoside 5'-phosphate + diphosphate + H(+). Nucleoside triphosphate pyrophosphatase. May have a dual role in cell division arrest and in preventing the incorporation of modified nucleotides into cellular nucleic acids. The sequence is that of Nucleoside triphosphate pyrophosphatase from Rhodopseudomonas palustris (strain BisB5).